A 142-amino-acid polypeptide reads, in one-letter code: Translation initiation factor 2 subunit beta (142 aa).

Belongs to the eIF-2-beta/eIF-5 family. Heterotrimer composed of an alpha, a beta and a gamma chain.

Functionally, eIF-2 functions in the early steps of protein synthesis by forming a ternary complex with GTP and initiator tRNA. This is Translation initiation factor 2 subunit beta from Methanosphaera stadtmanae (strain ATCC 43021 / DSM 3091 / JCM 11832 / MCB-3).